We begin with the raw amino-acid sequence, 80 residues long: Defensin-like protein 13 (80 aa).

Residues 1–29 (MAKSATIVTLFFAALVFFAALEAPMVVEA) form the signal peptide. Position 30 is a pyrrolidone carboxylic acid (glutamine 30). Disulfide bonds link cysteine 33–cysteine 80, cysteine 44–cysteine 65, cysteine 50–cysteine 74, and cysteine 54–cysteine 76.

This sequence belongs to the DEFL family. As to quaternary structure, forms oligomers in its native state. Expressed predominantly in siliques and dry seeds.

The protein resides in the secreted. Functionally, confers broad-spectrum resistance to pathogens. Possesses antifungal activity sensitive to inorganic cations in vitro. The protein is Defensin-like protein 13 (PDF1.1) of Arabidopsis thaliana (Mouse-ear cress).